We begin with the raw amino-acid sequence, 456 residues long: Solute carrier family 38 member 6 (456 aa).

An N-acetylmethionine modification is found at Met-1. 2 positions are modified to phosphoserine: Ser-4 and Ser-7. Transmembrane regions (helical) follow at residues 42-62 (SPGVSFGLSVFNLMNAIMGSG), 85-105 (VALLASYSVHLLLSMCIQTAV), 111-131 (LGLFAFGLPGKLVVAGTIIIQ), 170-190 (LLIIICVGIVFPLALLPKIGF), and 191-211 (LGYTSSLSFFFMMFFALVVII). A disulfide bond links Cys-218 and Cys-238. The N-linked (GlcNAc...) asparagine glycan is linked to Asn-233. Residues 250–270 (AYALPTMAFSFLCHTSILPIY) form a helical membrane-spanning segment. The N-linked (GlcNAc...) asparagine glycan is linked to Asn-283. Helical transmembrane passes span 288 to 308 (AIALSFLIYFISALFGYLTFY), 327 to 347 (VVVMTVKLCILFAVLLTVPLI), 371 to 391 (FLITLALNIIIVLLAIYVPDI), 394 to 414 (VFGVVGASTSTCLIFIFPGLF), and 431 to 451 (AFVLLIFGILVGNFSLALIIF).

It belongs to the amino acid/polyamine transporter 2 family.

The protein localises to the cell membrane. It localises to the synapse. The enzyme catalyses L-glutamine(out) = L-glutamine(in). The catalysed reaction is L-glutamate(out) = L-glutamate(in). Amino acid transporter with an apparent selectivity for L-glutamine and L-glutamate. May facilitate glutamine uptake in excitatory neurons. The transport mechanism remains to be elucidated. The protein is Solute carrier family 38 member 6 of Homo sapiens (Human).